Reading from the N-terminus, the 328-residue chain is Radiation response metalloprotease IrrE (328 aa).

The tract at residues Met-1 to His-31 is disordered. His-118 lines the Zn(2+) pocket. Glu-119 is an active-site residue. Residues His-122 and Glu-149 each coordinate Zn(2+). 2 disordered regions span residues Pro-217–Arg-238 and Arg-309–Gln-328.

Plays a central regulatory role in DNA repair and protection pathways in response to radiation stress. Acts as a site-specific metalloprotease that cleaves and inactivates the repressor protein DdrO, resulting in induced expression of genes required for DNA repair and cell survival after exposure to radiation. Regulates the expression of dozens of proteins from different pathways, including the important DNA repair proteins RecA and PprA. Binds to the promoters of recA and pprA. The polypeptide is Radiation response metalloprotease IrrE (Deinococcus radiodurans (strain ATCC 13939 / DSM 20539 / JCM 16871 / CCUG 27074 / LMG 4051 / NBRC 15346 / NCIMB 9279 / VKM B-1422 / R1)).